We begin with the raw amino-acid sequence, 347 residues long: GMP reductase (347 aa).

Ala108–Ala131 is a binding site for NADP(+). K(+) is bound by residues Gly181 and Gly183. The Thioimidate intermediate role is filled by Cys186. An NADP(+)-binding site is contributed by Ile216–Val239.

The protein belongs to the IMPDH/GMPR family. GuaC type 1 subfamily. In terms of assembly, homotetramer.

It catalyses the reaction IMP + NH4(+) + NADP(+) = GMP + NADPH + 2 H(+). In terms of biological role, catalyzes the irreversible NADPH-dependent deamination of GMP to IMP. It functions in the conversion of nucleobase, nucleoside and nucleotide derivatives of G to A nucleotides, and in maintaining the intracellular balance of A and G nucleotides. The chain is GMP reductase from Citrobacter koseri (strain ATCC BAA-895 / CDC 4225-83 / SGSC4696).